The chain runs to 375 residues: Lipid-A-disaccharide synthase (375 aa).

The protein belongs to the LpxB family.

The catalysed reaction is a lipid X + a UDP-2-N,3-O-bis[(3R)-3-hydroxyacyl]-alpha-D-glucosamine = a lipid A disaccharide + UDP + H(+). The protein operates within bacterial outer membrane biogenesis; LPS lipid A biosynthesis. In terms of biological role, condensation of UDP-2,3-diacylglucosamine and 2,3-diacylglucosamine-1-phosphate to form lipid A disaccharide, a precursor of lipid A, a phosphorylated glycolipid that anchors the lipopolysaccharide to the outer membrane of the cell. This is Lipid-A-disaccharide synthase from Pseudomonas putida (strain W619).